Reading from the N-terminus, the 245-residue chain is uncharacterized protein (245 aa).

This is an uncharacterized protein from Acanthamoeba polyphaga (Amoeba).